A 327-amino-acid polypeptide reads, in one-letter code: Phenylalanine--tRNA ligase alpha subunit (327 aa).

Position 252 (glutamate 252) interacts with Mg(2+).

This sequence belongs to the class-II aminoacyl-tRNA synthetase family. Phe-tRNA synthetase alpha subunit type 1 subfamily. In terms of assembly, tetramer of two alpha and two beta subunits. Mg(2+) serves as cofactor.

The protein resides in the cytoplasm. It carries out the reaction tRNA(Phe) + L-phenylalanine + ATP = L-phenylalanyl-tRNA(Phe) + AMP + diphosphate + H(+). The polypeptide is Phenylalanine--tRNA ligase alpha subunit (Shigella flexneri).